Consider the following 85-residue polypeptide: MEEIIDVKNPKEVIEYLNNIDVDEYVEIYFGRVHVEGRLMHYNDGLIRLVHEKYGIIEVEIEKILDDLLELVHSNGEKRVVLRFY.

This is an uncharacterized protein from Methanocaldococcus jannaschii (strain ATCC 43067 / DSM 2661 / JAL-1 / JCM 10045 / NBRC 100440) (Methanococcus jannaschii).